Reading from the N-terminus, the 212-residue chain is Thymidylate kinase (212 aa).

11–18 (GPEGAGKT) contributes to the ATP binding site.

It belongs to the thymidylate kinase family.

It catalyses the reaction dTMP + ATP = dTDP + ADP. Functionally, phosphorylation of dTMP to form dTDP in both de novo and salvage pathways of dTTP synthesis. This is Thymidylate kinase from Streptococcus pneumoniae (strain Hungary19A-6).